A 238-amino-acid chain; its full sequence is Sugar fermentation stimulation protein homolog (238 aa).

This sequence belongs to the SfsA family.

The protein is Sugar fermentation stimulation protein homolog of Brucella melitensis biotype 1 (strain ATCC 23456 / CCUG 17765 / NCTC 10094 / 16M).